Here is a 429-residue protein sequence, read N- to C-terminus: ATP-dependent RNA helicase RhlB (429 aa).

Positions 9 to 37 match the Q motif motif; sequence DKFAQMGLEPEVLAGLESKGFHYCTPIQA. A Helicase ATP-binding domain is found at 40–219; the sequence is LPLLVEGHDL…YEHMNHPEHV (180 aa). 53–60 is an ATP binding site; the sequence is AQTGTGKT. A DEAD box motif is present at residues 165–168; sequence DEAD. The Helicase C-terminal domain maps to 243–390; that stretch reads KMLLLLSLME…VSKYDREALL (148 aa). Residues 399-429 form a disordered region; sequence VFRNRQPVNRNMRDRQGGGNSNNRRRPPRKS.

This sequence belongs to the DEAD box helicase family. RhlB subfamily. In terms of assembly, component of the RNA degradosome, which is a multiprotein complex involved in RNA processing and mRNA degradation.

Its subcellular location is the cytoplasm. It catalyses the reaction ATP + H2O = ADP + phosphate + H(+). In terms of biological role, DEAD-box RNA helicase involved in RNA degradation. Has RNA-dependent ATPase activity and unwinds double-stranded RNA. This chain is ATP-dependent RNA helicase RhlB, found in Aeromonas hydrophila subsp. hydrophila (strain ATCC 7966 / DSM 30187 / BCRC 13018 / CCUG 14551 / JCM 1027 / KCTC 2358 / NCIMB 9240 / NCTC 8049).